Consider the following 498-residue polypeptide: MNQSIPVAPTPPRRVRLKPWLVAQVNSCQYPGLQWVNGEKKLFCIPWRHATRHGPSQDGDNTIFKAWAKETGKYTEGVDEADPAKWKANLRCALNKSRDFRLIYDGPRDMPPQPYKIYEVCSNGPAPTDSQPPEDYSFGAGEEEEEEEELQRMLPSLSLTEDVKWPPTLQPPTLRPPTLQPPTLQPPVVLGPPAPDPSPLAPPPGNPAGFRELLSEVLEPGPLPASLPPAGEQLLPDLLISPHMLPLTDLEIKFQYRGRPPRALTISNPHGCRLFYSQLEATQEQVELFGPISLEQVRFPSPEDIPSDKQRFYTNQLLDVLDRGLILQLQGQDLYAIRLCQCKVFWSGPCASAHDSCPNPIQREVKTKLFSLEHFLNELILFQKGQTNTPPPFEIFFCFGEEWPDRKPREKKLITVQVVPVAARLLLEMFSGELSWSADSIRLQISNPDLKDRMVEQFKELHHIWQSQQRLQPVAQAPPGAGLGVGQGPWPMHPAGMQ.

Thr10 carries the phosphothreonine modification. The Nuclear localization signal signature appears at 12–18 (PRRVRLK). Residues 14-122 (RVRLKPWLVA…QPYKIYEVCS (109 aa)) constitute a DNA-binding region (IRF tryptophan pentad repeat). Residues 121–207 (CSNGPAPTDS…SPLAPPPGNP (87 aa)) form a disordered region. Residues 150 to 160 (LQRMLPSLSLT) carry the Nuclear export signal motif. Ser158 carries the post-translational modification Phosphoserine; by TBK1. Residues 168–206 (TLQPPTLRPPTLQPPTLQPPVVLGPPAPDPSPLAPPPGN) show a composition bias toward pro residues. Phosphoserine; by TBK1 is present on Ser293. Phosphoserine is present on Ser301. Residues Lys411 and Lys412 each participate in a glycyl lysine isopeptide (Lys-Gly) (interchain with G-Cter in ubiquitin) cross-link. A phosphoserine mark is found at Ser431, Ser435, Ser437, and Ser440. Ser446 is modified (phosphoserine; by IKKB). Residues 478 to 498 (PPGAGLGVGQGPWPMHPAGMQ) form a disordered region.

It belongs to the IRF family. Homodimer, when phosphorylated. Interacts with TASL (via pLxIS motif); interaction takes place downstream of TLR7, TLR8 or TLR9, leading to its activation. Interacts with MYD88 and TRAF6. Post-translationally, phosphorylation of serine and threonine residues by IKBKB in a C-terminal autoinhibitory region, stimulates dimerization, transport into the nucleus, assembly with the coactivator CBP/EP300 and initiation of transcription. 'Lys-63'-linked polyubiquitination by TRAF6 is required for activation.

It localises to the cytoplasm. It is found in the nucleus. With respect to regulation, maintained as a monomer in an autoinhibited state. Phosphorylation and activation follow the following steps: innate adapter protein TASL recruits IRF5, thereby licensing IRF5 for phosphorylation by IKBKB. Phosphorylated IRF5 dissociates from the adapter proteins, dimerizes, and then enters the nucleus to induce IFNs. (Microbial infection) Activated upon coronavirus SARS-CoV-2 infection. Its function is as follows. Transcription factor that plays a critical role in innate immunity by activating expression of type I interferon (IFN) IFNA and INFB and inflammatory cytokines downstream of endolysosomal toll-like receptors TLR7, TLR8 and TLR9. Regulates the transcription of type I IFN genes (IFN-alpha and IFN-beta) and IFN-stimulated genes (ISG) by binding to an interferon-stimulated response element (ISRE) in their promoters. Can efficiently activate both the IFN-beta (IFNB) and the IFN-alpha (IFNA) genes and mediate their induction downstream of the TLR-activated, MyD88-dependent pathway. Key transcription factor regulating the IFN response during SARS-CoV-2 infection. The polypeptide is Interferon regulatory factor 5 (Homo sapiens (Human)).